The chain runs to 381 residues: Dual specificity protein phosphatase 6 (381 aa).

The region spanning 30 to 148 (GNERLLLMDC…FQAEFALHCE (119 aa)) is the Rhodanese domain. The tract at residues 176–203 (SSSDIESDLDRDPNSATDSDGSPLSNSQ) is disordered. The segment covering 189–203 (NSATDSDGSPLSNSQ) has biased composition (polar residues). The Tyrosine-protein phosphatase domain occupies 206 to 349 (FPVEILPFLY…LLDFERTLGL (144 aa)). Cysteine 293 serves as the catalytic Phosphocysteine intermediate.

This sequence belongs to the protein-tyrosine phosphatase family. Non-receptor class dual specificity subfamily. Interacts with MAPK1/ERK2. Post-translationally, ubiquitinated by the SCF(FBXO31) complex, leading to its proteasomal degradation.

It is found in the cytoplasm. The enzyme catalyses O-phospho-L-tyrosyl-[protein] + H2O = L-tyrosyl-[protein] + phosphate. It catalyses the reaction O-phospho-L-seryl-[protein] + H2O = L-seryl-[protein] + phosphate. It carries out the reaction O-phospho-L-threonyl-[protein] + H2O = L-threonyl-[protein] + phosphate. Functionally, dual specificity protein phosphatase, which mediates dephosphorylation and inactivation of MAP kinases. Has a specificity for the ERK family. Plays an important role in alleviating acute postoperative pain. Necessary for the normal dephosphorylation of the long-lasting phosphorylated forms of spinal MAPK1/3 and MAP kinase p38 induced by peripheral surgery, which drives the resolution of acute postoperative allodynia. Also important for dephosphorylation of MAPK1/3 in local wound tissue, which further contributes to resolution of acute pain. This is Dual specificity protein phosphatase 6 (Dusp6) from Mus musculus (Mouse).